Here is a 240-residue protein sequence, read N- to C-terminus: Uridylate kinase (240 aa).

12-15 is an ATP binding site; sequence KLSG. The segment at 20–25 is involved in allosteric activation by GTP; that stretch reads GDKGFG. G54 provides a ligand contact to UMP. ATP contacts are provided by G55 and R59. UMP-binding positions include D74 and 135–142; that span reads TGSPYFST. Residues N163, Y169, and D172 each coordinate ATP.

It belongs to the UMP kinase family. In terms of assembly, homohexamer.

Its subcellular location is the cytoplasm. It catalyses the reaction UMP + ATP = UDP + ADP. The protein operates within pyrimidine metabolism; CTP biosynthesis via de novo pathway; UDP from UMP (UMPK route): step 1/1. Allosterically activated by GTP. Inhibited by UTP. Its function is as follows. Catalyzes the reversible phosphorylation of UMP to UDP. In Limosilactobacillus reuteri (strain DSM 20016) (Lactobacillus reuteri), this protein is Uridylate kinase.